Reading from the N-terminus, the 351-residue chain is Prostaglandin reductase 2 (351 aa).

99–100 (FY) is a binding site for substrate. NADP(+)-binding positions include 165–168 (GACG), Lys192, Tyr208, Asn231, 253–259 (CGQISQY), 287–289 (FLV), and Asn337. Position 288–290 (288–290 (LVL)) interacts with substrate.

It belongs to the NADP-dependent oxidoreductase L4BD family. Monomer.

Its subcellular location is the cytoplasm. It carries out the reaction 13,14-dihydro-15-oxo-prostaglandin E2 + NAD(+) = 15-oxoprostaglandin E2 + NADH + H(+). The catalysed reaction is 13,14-dihydro-15-oxo-prostaglandin E2 + NADP(+) = 15-oxoprostaglandin E2 + NADPH + H(+). It catalyses the reaction 13,14-dihydro-15-oxo-PGF2alpha + NADP(+) = 15-oxoprostaglandin F2alpha + NADPH + H(+). The enzyme catalyses 13,14-dihydro-15-oxo-prostaglandin E1 + NADP(+) = 15-oxoprostaglandin E1 + NADPH + H(+). It carries out the reaction 13,14-dihydro-15-oxo-prostaglandin F1alpha + NADP(+) = 15-oxoprostaglandin F1alpha + NADPH + H(+). Functionally, functions as 15-oxo-prostaglandin 13-reductase and acts on 15-keto-PGE1, 15-keto-PGE2, 15-keto-PGE1-alpha and 15-keto-PGE2-alpha with highest activity towards 15-keto-PGE2. Overexpression represses transcriptional activity of PPARG and inhibits adipocyte differentiation. The sequence is that of Prostaglandin reductase 2 (PTGR2) from Bos taurus (Bovine).